A 213-amino-acid polypeptide reads, in one-letter code: MSDNLYTYGVIEQEDIELEIDGVAGAERVYTVDYRTLSAVVSDIDTTDPERTDEDVQVHNTVLQHVLEYDGGRTVVPMSFGMAFKNGRTLKGVMRGARRALRSALNDIEGTVELGVKIITSSEGGVSHDAIRADIGDRLSELSINETENDLFSDRLVVNKSYLVARDRRDDFDAAIDTIEEEYGDELTVQYTGPWAPYNFVDIHIGADQQRGR.

Belongs to the gas vesicle GvpF/GvpL family. As to quaternary structure, binds GvpA.

The protein localises to the gas vesicle. In terms of biological role, a minor component of the gas vesicle, may be involved in preventing GvpA aggregation during gas vesicle nucleation. Gas vesicles are hollow, gas filled proteinaceous nanostructures found in some microorganisms. They allow positioning of halobacteria at the optimal depth for growth in the poorly aerated, shallow brine pools of their habitat. Expression of a 9.5 kb mc-vac DNA fragment containing 2 divergently transcribed regions (gvpD-gvpE-gvpF-gvpG-gvpH-gvpI-gvpJ-gvpK-gvpL-gvpM and gvpA-gvpC-gvpN-gvpO) allows H.volcanii to produce gas vesicles. The chain is Gas vesicle protein F from Haloferax mediterranei (strain ATCC 33500 / DSM 1411 / JCM 8866 / NBRC 14739 / NCIMB 2177 / R-4) (Halobacterium mediterranei).